The primary structure comprises 324 residues: Quinolinate synthase (324 aa).

His39 and Ser56 together coordinate iminosuccinate. Position 101 (Cys101) interacts with [4Fe-4S] cluster. Residues 127 to 129 and Ser144 each bind iminosuccinate; that span reads YIN. Residue Cys187 participates in [4Fe-4S] cluster binding. Iminosuccinate contacts are provided by residues 213–215 and Thr230; that span reads HPE. Cys280 contributes to the [4Fe-4S] cluster binding site.

The protein belongs to the quinolinate synthase family. Type 2 subfamily. The cofactor is [4Fe-4S] cluster.

Its subcellular location is the cytoplasm. It catalyses the reaction iminosuccinate + dihydroxyacetone phosphate = quinolinate + phosphate + 2 H2O + H(+). It participates in cofactor biosynthesis; NAD(+) biosynthesis; quinolinate from iminoaspartate: step 1/1. Functionally, catalyzes the condensation of iminoaspartate with dihydroxyacetone phosphate to form quinolinate. This Nostoc sp. (strain PCC 7120 / SAG 25.82 / UTEX 2576) protein is Quinolinate synthase.